Here is a 256-residue protein sequence, read N- to C-terminus: uncharacterized protein (256 aa).

An N-terminal signal peptide occupies residues 1 to 24 (MIKRVNKLVLGISLLFLVISITAG). Cys-25 carries N-palmitoyl cysteine lipidation. Residue Cys-25 is the site of S-diacylglycerol cysteine attachment.

It belongs to the staphylococcal tandem lipoprotein family.

The protein resides in the cell membrane. This is an uncharacterized protein from Staphylococcus aureus.